We begin with the raw amino-acid sequence, 286 residues long: Putative sugar uptake protein lmo0176 (286 aa).

The next 8 helical transmembrane spans lie at 4–26, 33–55, 114–136, 149–167, 177–194, 207–226, 230–252, and 264–283; these read MIALIPALLWGTVPLIITKFGGS, GMTLGALTFAVIVFFFTDPVYTL, LRIILGFIALALIVGGIFLTSYA, GLITLFISACGYVGLVVLI, AILPQAIGMVISALIMTH, LLLTIPGVIWAAGNVAMVHA, VGVATGFSLSQLGVVISTIGGII, and LFVIVGVVLVVLGGILIGVA.

This sequence belongs to the GRP transporter (TC 2.A.7.5) family.

The protein localises to the cell membrane. In Listeria monocytogenes serovar 1/2a (strain ATCC BAA-679 / EGD-e), this protein is Putative sugar uptake protein lmo0176.